A 244-amino-acid chain; its full sequence is Gas vesicle protein F (244 aa).

The N-terminus stretch occupies residues 1–109; sequence MTVGLYLYGI…QLKELFAKLS (109 aa). The segment at 110-233 is C-terminus, modifed ferredoxin fold; that stretch reads GQREVSIKIF…GDRLRIRYNN (124 aa). Positions 234 to 244 are C-tail; that stretch reads LTAPYTFAQLI.

This sequence belongs to the gas vesicle GvpF/GvpL family. Binds GvpA.

It localises to the gas vesicle. In terms of biological role, a minor component of the gas vesicle, may be involved in preventing GvpA aggregation during gas vesicle nucleation. Gas vesicles (GV) are hollow, gas filled proteinaceous nanostructures. During planktonic growth they allow positioning of the organism at a favorable depth for light or nutrient acquisition. This is Gas vesicle protein F from Microcystis aeruginosa (strain PCC 7806).